A 278-amino-acid polypeptide reads, in one-letter code: Heat stress transcription factor C-2b (278 aa).

Positions 105–114 are enriched in gly residues; it reads AAGGGGGGGG. Residues 105–132 are disordered; the sequence is AAGGGGGGGGGKRRDASADGGGGGGDED. A hydrophobic repeat HR-A/B region spans residues 143-179; that stretch reads LKQEQRTIDDRVAAMWRRVQETERRPKQMLAFLLKVV. The Nuclear localization signal signature appears at 219–222; that stretch reads KRAR.

It belongs to the HSF family. Class C subfamily. In terms of assembly, homotrimer. In terms of processing, exhibits temperature-dependent phosphorylation.

It is found in the nucleus. Its function is as follows. Transcriptional regulator that specifically binds DNA of heat shock promoter elements (HSE). The polypeptide is Heat stress transcription factor C-2b (HSFC2B) (Oryza sativa subsp. japonica (Rice)).